A 503-amino-acid polypeptide reads, in one-letter code: 2-isopropylmalate synthase (503 aa).

A Pyruvate carboxyltransferase domain is found at 4–264; sequence LYIFDTTLRD…EVSIKTEEIY (261 aa). Residues D13, H201, H203, and N237 each coordinate Mn(2+). The regulatory domain stretch occupies residues 388 to 503; that stretch reads KLRHLQVVSG…NQLVMLKGKD (116 aa).

Belongs to the alpha-IPM synthase/homocitrate synthase family. LeuA type 1 subfamily. Homodimer. The cofactor is Mn(2+).

It localises to the cytoplasm. The catalysed reaction is 3-methyl-2-oxobutanoate + acetyl-CoA + H2O = (2S)-2-isopropylmalate + CoA + H(+). It functions in the pathway amino-acid biosynthesis; L-leucine biosynthesis; L-leucine from 3-methyl-2-oxobutanoate: step 1/4. Functionally, catalyzes the condensation of the acetyl group of acetyl-CoA with 3-methyl-2-oxobutanoate (2-ketoisovalerate) to form 3-carboxy-3-hydroxy-4-methylpentanoate (2-isopropylmalate). In Dictyoglomus turgidum (strain DSM 6724 / Z-1310), this protein is 2-isopropylmalate synthase.